The primary structure comprises 617 residues: uncharacterized protein (617 aa).

Residues 103 to 123 form a helical membrane-spanning segment; sequence AGVLLAKFFPLLFLYPLTYLA. The region spanning 200-609 is the Protein kinase domain; sequence FETREPVGSG…DILEAAKPFL (410 aa). ATP is bound by residues 206-214 and Lys-302; that span reads VGSGCVAQV. Catalysis depends on Asp-436, which acts as the Proton acceptor.

The protein belongs to the protein kinase superfamily. ADCK protein kinase family.

Its subcellular location is the mitochondrion. The protein resides in the membrane. In terms of biological role, the function of this protein is not yet clear. It is not known if it has protein kinase activity and what type of substrate it would phosphorylate (Ser, Thr or Tyr). Involved in the mitochondrial import of CoQ precursors, plays a role in muscle mitochondrial function and fatty acid beta-oxidation. This is an uncharacterized protein from Mus musculus (Mouse).